The sequence spans 87 residues: Pyocin-S1 immunity protein (87 aa).

It belongs to the colicins ColE2/ColE8/ColE9 and pyocins S1/S2 family.

The polypeptide is Pyocin-S1 immunity protein (imm1) (Pseudomonas aeruginosa).